The chain runs to 486 residues: N-succinylglutamate 5-semialdehyde dehydrogenase (486 aa).

Residue 220 to 225 (GSSRTG) coordinates NAD(+). Residues glutamate 243 and cysteine 277 contribute to the active site.

It belongs to the aldehyde dehydrogenase family. AstD subfamily.

It catalyses the reaction N-succinyl-L-glutamate 5-semialdehyde + NAD(+) + H2O = N-succinyl-L-glutamate + NADH + 2 H(+). It participates in amino-acid degradation; L-arginine degradation via AST pathway; L-glutamate and succinate from L-arginine: step 4/5. In terms of biological role, catalyzes the NAD-dependent reduction of succinylglutamate semialdehyde into succinylglutamate. In Shewanella frigidimarina (strain NCIMB 400), this protein is N-succinylglutamate 5-semialdehyde dehydrogenase.